We begin with the raw amino-acid sequence, 316 residues long: Olfactory receptor 2K2 (316 aa).

The Extracellular portion of the chain corresponds to 1–20; the sequence is MQGENFTIWSIFFLEGFSQY. Residue Asn5 is glycosylated (N-linked (GlcNAc...) asparagine). A helical membrane pass occupies residues 21-41; sequence PGLEVVLFVFSLVMYLTTLLG. Over 42–65 the chain is Cytoplasmic; the sequence is NSTLILITILDSRLKTPMYLFLGN. Residues 66 to 86 traverse the membrane as a helical segment; the sequence is LSFMDICYTSASVPTLLVNLL. The Extracellular segment spans residues 87–97; the sequence is SSQKTIIFSGC. Cysteines 97 and 188 form a disulfide. A helical membrane pass occupies residues 98-118; the sequence is AVQMYLSLAMGSTECVLLAVM. Topologically, residues 119 to 143 are cytoplasmic; the sequence is AYDRYVAICNPLRYSIIMNRCVCAR. The chain crosses the membrane as a helical span at residues 144 to 164; that stretch reads MATVSWVTGCLTALLETSFAL. Residues 165–199 lie on the Extracellular side of the membrane; sequence QIPLCGNLIDHFTCEILAVLKLACTSSLLMNTIML. The helical transmembrane segment at 200-220 threads the bilayer; it reads VVSILLLPIPMLLVCISYIFI. The Cytoplasmic portion of the chain corresponds to 221 to 238; it reads LSTILRITSAEGRNKAFS. Residues 239–259 traverse the membrane as a helical segment; that stretch reads TCGAHLTVVILYYGAALSMYL. Residues 260–270 lie on the Extracellular side of the membrane; that stretch reads KPSSSNAQKID. A helical membrane pass occupies residues 271–291; it reads KIISLLYGVLTPMLNPIIYSL. Residues 292–316 lie on the Cytoplasmic side of the membrane; the sequence is RNKEVKDAMKKLLGKITLHQTHEHL.

Belongs to the G-protein coupled receptor 1 family.

It is found in the cell membrane. Functionally, odorant receptor. This is Olfactory receptor 2K2 (OR2K2) from Homo sapiens (Human).